Consider the following 273-residue polypeptide: Transposable element Tcb1 transposase (273 aa).

Belongs to the transposase 5 family.

The protein localises to the nucleus. Functionally, probably essential for transposable element Tcb1 transposition. The insertion of Tcb1 is the main cause of spontaneous mutations. In Caenorhabditis briggsae, this protein is Transposable element Tcb1 transposase.